Reading from the N-terminus, the 49-residue chain is Large ribosomal subunit protein bL33 (49 aa).

This sequence belongs to the bacterial ribosomal protein bL33 family.

The protein is Large ribosomal subunit protein bL33 of Thermosipho melanesiensis (strain DSM 12029 / CIP 104789 / BI429).